Consider the following 193-residue polypeptide: Acyl carrier protein phosphodiesterase (193 aa).

It belongs to the AcpH family.

It catalyses the reaction holo-[ACP] + H2O = apo-[ACP] + (R)-4'-phosphopantetheine + H(+). Its function is as follows. Converts holo-ACP to apo-ACP by hydrolytic cleavage of the phosphopantetheine prosthetic group from ACP. The sequence is that of Acyl carrier protein phosphodiesterase from Enterobacter sp. (strain 638).